The chain runs to 260 residues: Exosome complex component Rrp4 (260 aa).

The S1 motif domain occupies 59 to 128; it reads NDVVIGIVIV…SSMKVELALR (70 aa). The KH domain occupies 136–194; it reads KTGQIIKVESVKVPRVIGHGGSMISMLKKETNCSIFVGQNGRIWIDGKDEDIELLSKAL.

Belongs to the RRP4 family. As to quaternary structure, component of the archaeal exosome complex. Forms a trimer of Rrp4 and/or Csl4 subunits. The trimer associates with a hexameric ring-like arrangement composed of 3 Rrp41-Rrp42 heterodimers.

It is found in the cytoplasm. In terms of biological role, non-catalytic component of the exosome, which is a complex involved in RNA degradation. Increases the RNA binding and the efficiency of RNA degradation. Confers strong poly(A) specificity to the exosome. The chain is Exosome complex component Rrp4 from Methanosarcina acetivorans (strain ATCC 35395 / DSM 2834 / JCM 12185 / C2A).